Here is a 287-residue protein sequence, read N- to C-terminus: uncharacterized protein (287 aa).

The region spanning 115–287 is the ATP-grasp domain; it reads SLLSKETIKS…KKFLKKKLIS (173 aa).

This is an uncharacterized protein from Mycoplasma genitalium (strain ATCC 33530 / DSM 19775 / NCTC 10195 / G37) (Mycoplasmoides genitalium).